A 718-amino-acid chain; its full sequence is Glycine--tRNA ligase beta subunit (718 aa).

The protein belongs to the class-II aminoacyl-tRNA synthetase family. As to quaternary structure, tetramer of two alpha and two beta subunits.

Its subcellular location is the cytoplasm. It catalyses the reaction tRNA(Gly) + glycine + ATP = glycyl-tRNA(Gly) + AMP + diphosphate. The protein is Glycine--tRNA ligase beta subunit of Mesorhizobium japonicum (strain LMG 29417 / CECT 9101 / MAFF 303099) (Mesorhizobium loti (strain MAFF 303099)).